The following is a 248-amino-acid chain: MSLFPSLTLLLLSVVATSYSETVTCEDSQKICPAVIACNSPGINGFPGKDGRDGTKGEKGEPGQGLRGLQGPPGKLGPPGNPGSSGSPGPKGQKGDPGESPDGDSSLAASERKALQTEMARIKKWLTFSLGRQVGNKFFLTNGEMMSFDKVKALCAKFQASVATPRNAAENRAIQNLIKEEAFLGITDENTEGEFVDLTGNKLTYTNWNNGEPNNAGSNEDCVLLLKNGKWNDIPCSSSHLALCEFPI.

An N-terminal signal peptide occupies residues 1–20 (MSLFPSLTLLLLSVVATSYS). The 58-residue stretch at 42 to 99 (GINGFPGKDGRDGTKGEKGEPGQGLRGLQGPPGKLGPPGNPGSSGSPGPKGQKGDPGE) folds into the Collagen-like domain. The segment at 43–113 (INGFPGKDGR…DSSLAASERK (71 aa)) is disordered. A 4-hydroxyproline modification is found at Pro-47. Residues 49–61 (KDGRDGTKGEKGE) are compositionally biased toward basic and acidic residues. 4-hydroxyproline occurs at positions 73, 79, 82, and 88. The span at 82–91 (PGSSGSPGPK) shows a compositional bias: low complexity. Residues 112-130 (RKALQTEMARIKKWLTFSL) are a coiled coil. The region spanning 134 to 245 (VGNKFFLTNG…CSSSHLALCE (112 aa)) is the C-type lectin domain. 2 cysteine pairs are disulfide-bonded: Cys-155–Cys-244 and Cys-222–Cys-236.

Oligomeric complex of 3 or more homotrimers. Interacts with MASP1 and MASP2. Interacts with MEP1A and MEP1B and may inhibit their catalytic activity. In terms of processing, hydroxylation on proline residues within the sequence motif, GXPG, is most likely to be 4-hydroxy as this fits the requirement for 4-hydroxylation in vertebrates.

It localises to the secreted. Calcium-dependent lectin involved in innate immune defense. Binds mannose, fucose and N-acetylglucosamine on different microorganisms and activates the lectin complement pathway. Binds to late apoptotic cells, as well as to apoptotic blebs and to necrotic cells, but not to early apoptotic cells, facilitating their uptake by macrophages. In Chlorocebus aethiops (Green monkey), this protein is Mannose-binding protein C (MBL2).